Reading from the N-terminus, the 103-residue chain is Somatostatin-2 (103 aa).

Residues Met1–Ser21 form the signal peptide. Positions Gln22–Glu87 are excised as a propeptide. An intrachain disulfide couples Cys92 to Cys103.

The protein belongs to the somatostatin family.

The protein resides in the secreted. In terms of biological role, somatostatin inhibits the release of somatotropin. This is Somatostatin-2 (sst2) from Pelophylax ridibundus (Marsh frog).